We begin with the raw amino-acid sequence, 406 residues long: Argininosuccinate synthase (406 aa).

Residues 11–19 and A38 contribute to the ATP site; that span reads AYSGGLDTS. 2 residues coordinate L-citrulline: Y91 and S96. G121 is an ATP binding site. 3 residues coordinate L-aspartate: T123, N127, and D128. N127 is a binding site for L-citrulline. L-citrulline contacts are provided by R131, S181, S190, E266, and Y278.

This sequence belongs to the argininosuccinate synthase family. Type 1 subfamily. As to quaternary structure, homotetramer.

Its subcellular location is the cytoplasm. The enzyme catalyses L-citrulline + L-aspartate + ATP = 2-(N(omega)-L-arginino)succinate + AMP + diphosphate + H(+). The protein operates within amino-acid biosynthesis; L-arginine biosynthesis; L-arginine from L-ornithine and carbamoyl phosphate: step 2/3. The polypeptide is Argininosuccinate synthase (Campylobacter hominis (strain ATCC BAA-381 / DSM 21671 / CCUG 45161 / LMG 19568 / NCTC 13146 / CH001A)).